Here is a 337-residue protein sequence, read N- to C-terminus: L-Ala-D/L-amino acid epimerase (337 aa).

Substrate is bound by residues T129 and 151 to 153 (KIK). Residues D177, E203, and D228 each coordinate Mg(2+). Residues K250 and 300-302 (DMD) contribute to the substrate site.

The protein belongs to the mandelate racemase/muconate lactonizing enzyme family. The cofactor is Mg(2+).

Its function is as follows. Broad specificity dipeptide epimerase. Catalyzes the epimerization of L-Ala-L-Ala, L-Ala-L-Glu, L-Ala-L-Ser, L-Ala-L-Thr and L-Ala-L-Met (in vitro). The protein is L-Ala-D/L-amino acid epimerase of Maribacter sp. (strain HTCC2170 / KCCM 42371).